A 275-amino-acid chain; its full sequence is 2,3,4,5-tetrahydropyridine-2,6-dicarboxylate N-succinyltransferase (275 aa).

2 residues coordinate substrate: R108 and D145.

It belongs to the transferase hexapeptide repeat family. As to quaternary structure, homotrimer.

It localises to the cytoplasm. It carries out the reaction (S)-2,3,4,5-tetrahydrodipicolinate + succinyl-CoA + H2O = (S)-2-succinylamino-6-oxoheptanedioate + CoA. Its pathway is amino-acid biosynthesis; L-lysine biosynthesis via DAP pathway; LL-2,6-diaminopimelate from (S)-tetrahydrodipicolinate (succinylase route): step 1/3. The chain is 2,3,4,5-tetrahydropyridine-2,6-dicarboxylate N-succinyltransferase from Ruegeria pomeroyi (strain ATCC 700808 / DSM 15171 / DSS-3) (Silicibacter pomeroyi).